A 121-amino-acid chain; its full sequence is Phosphoribosyl-ATP pyrophosphatase (121 aa).

The protein belongs to the PRA-PH family.

Its subcellular location is the cytoplasm. The catalysed reaction is 1-(5-phospho-beta-D-ribosyl)-ATP + H2O = 1-(5-phospho-beta-D-ribosyl)-5'-AMP + diphosphate + H(+). It functions in the pathway amino-acid biosynthesis; L-histidine biosynthesis; L-histidine from 5-phospho-alpha-D-ribose 1-diphosphate: step 2/9. This is Phosphoribosyl-ATP pyrophosphatase from Nitrosospira multiformis (strain ATCC 25196 / NCIMB 11849 / C 71).